A 358-amino-acid polypeptide reads, in one-letter code: Phospho-N-acetylmuramoyl-pentapeptide-transferase (358 aa).

10 helical membrane passes run 24–44 (FRSIYAMITALLLAFIVGPWV), 73–93 (TMGGVLILVCIVLPTLLWADL), 95–115 (NVFIWLTLLIIVGYGVLGFVD), 134–154 (MFWQMLLAAGVGIFLFYLPGF), 169–189 (ELGILFIPFVMLVIVGASNAV), 197–217 (GLAIGPVAINAATYLLFCYIA), 233–253 (GAGELAVLCGAMVGAGLGFLW), 261–281 (VFMGDVGSLSLGGALGTLAVL), 286–306 (ILLVIVGGVFVVEALSVIFQV), and 335–355 (KIIVRFWIITIILALVAISTL).

It belongs to the glycosyltransferase 4 family. MraY subfamily. The cofactor is Mg(2+).

The protein resides in the cell inner membrane. The catalysed reaction is UDP-N-acetyl-alpha-D-muramoyl-L-alanyl-gamma-D-glutamyl-meso-2,6-diaminopimeloyl-D-alanyl-D-alanine + di-trans,octa-cis-undecaprenyl phosphate = di-trans,octa-cis-undecaprenyl diphospho-N-acetyl-alpha-D-muramoyl-L-alanyl-D-glutamyl-meso-2,6-diaminopimeloyl-D-alanyl-D-alanine + UMP. The protein operates within cell wall biogenesis; peptidoglycan biosynthesis. Catalyzes the initial step of the lipid cycle reactions in the biosynthesis of the cell wall peptidoglycan: transfers peptidoglycan precursor phospho-MurNAc-pentapeptide from UDP-MurNAc-pentapeptide onto the lipid carrier undecaprenyl phosphate, yielding undecaprenyl-pyrophosphoryl-MurNAc-pentapeptide, known as lipid I. The protein is Phospho-N-acetylmuramoyl-pentapeptide-transferase of Citrifermentans bemidjiense (strain ATCC BAA-1014 / DSM 16622 / JCM 12645 / Bem) (Geobacter bemidjiensis).